Reading from the N-terminus, the 908-residue chain is MADEDDGLQLNICYLQRVPKKEINSKAEEEAYFKENISNNNNFTNNRAYREKTNKNENNLNNNKNNNNNNNNNKTYNNNNSNNSYNNNNYNNNSFNNNNNNNYNNNNSNNNNNSNNNNLNKKPTFLEKKIQQEQKQKELKELKGPQHHRYRNQENEESNAIESNSNNFKDKYKFAENKTKKDEFNRPILETIESNIKVEKSETFSSMNWGSLQLSETLVRNLVGHMKHEKPTHIQEASITPILKGNDALVKAQTGSGKTLSYLIPVVQKLTEQRVTRSDGCYCVIITPTRELSSQIYEELQKLLKPFYWIVPGIIMGGENRSAEKARIRKGINILVATPGRLLDHLQNTQSFPTDNIKWCILDEADKLLDLGFEKDVTTIINLLDSKKRTMKFKRQNILVSATLSEGISRLASLSLTSPVYIGLDSKVLEKGENPFQAAEKEMLQAPKQLDQFYVEVESKERLTSLIAFIRWKTSNITIDKGDVASGNSSANSKMIVFFSSCDSVDFHHYMFSNMKMDKERGVKRTKKEQIKQDKLIQQHKQKNSKIFQTGNESDDEESDNDDSDDSDSNNSDSETDEEKEIEKQIKEATSNPNYRVKTSVFSVPIFKLHGELDQQTRTKTFFDFKNSPNGILLTTDVSARGLDLPSVNWIVQYDPCSDTKDYIHRIGRTARLGNQGCSLLFLLPSEKKYIDHLAKFNVSVKEMKVTTILQSLFYTSDGQLKKTSKSSQLESQVHDLQLLFERFLIYDSKAKEMARCAYQSFLRSYATHKADVKSIFHISYLHLGHVSKSFALRETPTELNKMSAGIKGAKAAKKGDEDTLQKQTADFKMKNYKSVNEFSDGLNDQPLQRANFHYESASGVIHNIYQRHFNRNERDEADKNSNPKEIKEKKRRLYDKKIESNKKFKSK.

The tract at residues 55–165 (KNENNLNNNK…EESNAIESNS (111 aa)) is disordered. Positions 56-122 (NENNLNNNKN…NSNNNNLNKK (67 aa)) are enriched in low complexity. Basic and acidic residues predominate over residues 124–144 (TFLEKKIQQEQKQKELKELKG). Positions 207 to 236 (MNWGSLQLSETLVRNLVGHMKHEKPTHIQE) match the Q motif motif. Residues 239–422 (ITPILKGNDA…SLSLTSPVYI (184 aa)) enclose the Helicase ATP-binding domain. Position 252–259 (252–259 (AQTGSGKT)) interacts with ATP. The short motif at 363 to 366 (DEAD) is the DEAD box element. One can recognise a Helicase C-terminal domain in the interval 518–738 (DKERGVKRTK…QLESQVHDLQ (221 aa)). A compositionally biased stretch (basic and acidic residues) spans 519–537 (KERGVKRTKKEQIKQDKLI). Disordered regions lie at residues 519–590 (KERG…KEAT) and 872–908 (RNER…FKSK). Over residues 553-580 (ESDDEESDNDDSDDSDSNNSDSETDEEK) the composition is skewed to acidic residues. Composition is skewed to basic and acidic residues over residues 872–889 (RNER…EIKE) and 896–908 (DKKI…FKSK).

This sequence belongs to the DEAD box helicase family. DDX31/DBP7 subfamily.

Its subcellular location is the nucleus. The protein localises to the nucleolus. The catalysed reaction is ATP + H2O = ADP + phosphate + H(+). May have DNA helicase activity and RNA helicase activity. Probably have ssDNA and RNA dependent ATPase activity. This Dictyostelium discoideum (Social amoeba) protein is ATP-dependent DNA helicase DDX31 (ddx31).